We begin with the raw amino-acid sequence, 91 residues long: uncharacterized protein (91 aa).

This is an uncharacterized protein from Kluyveromyces lactis (strain ATCC 8585 / CBS 2359 / DSM 70799 / NBRC 1267 / NRRL Y-1140 / WM37) (Yeast).